The primary structure comprises 105 residues: ESAT-6-like protein EsxU (105 aa).

The protein belongs to the WXG100 family. CFP-10 subfamily. In terms of assembly, forms a tight 1:1 complex with EsxT. Complex formation results in induction of alpha-helical conformation and stability against chemical denaturation.

The protein resides in the secreted. This is ESAT-6-like protein EsxU from Mycobacterium tuberculosis (strain ATCC 25618 / H37Rv).